Consider the following 599-residue polypeptide: MTTQAPPSNLLPLNPEQLARLQAATTDFTPTQLAWVSGYFWGVLNQQSGAAVAAPAPAAEVPTITLISASQTGNARRVAEALRDDLLAAKLNVKLVNAGDYKFKQIAAEKLLVVVTSTQGEGEPPEEAVALHKFLFSKKAPKLDGTAFAVFGLGDTSYEFFCQSGKDFDNKLAELGAERLLDRVDADVEYQAAAAEWRARVVEALKARAPVAAPAQLATSGAVNDIHTSPYTKEAPLTATLSVNQKITGRNSEKDVRHIEIDLGDSGLRYQPGDALGVWYQNDPQLVKELVELLWLKGDEPVTVEGKTLPLSEALQWHFELTVNTATIVENYATLTRSESLLPLVGDKAQLQQYAAATPIVDMVRFSPAQLDAEALIGLLRPLTPRLYSIASSQAEVESEVHVTVGVVRYEIEGRARAGGASSFLADRVEEDGEVRVFIEHNDNFRLPANPETPVIMIGPGTGIAPFRAFMQQRAADGAQGKNWLFFGNPHFTEDFLYQVEWQSYVKEGLLTRIDLAWSRDQQQKIYVQDKLREQGAELWRWINDGAHIYVCGDANRMAKDVENTLLEVIAEYGAMDAEAADEFLSELRVERRYQRDVY.

One can recognise a Flavodoxin-like domain in the interval 64–202 (ITLISASQTG…AAAEWRARVV (139 aa)). FMN is bound by residues 70 to 75 (SQTGNA), 117 to 120 (STQG), and 153 to 162 (LGDTSYEFFC). The 215-residue stretch at 234–448 (EAPLTATLSV…IEHNDNFRLP (215 aa)) folds into the FAD-binding FR-type domain. FAD contacts are provided by residues Thr-322, Ala-356, 386–389 (RLYS), 404–406 (TVG), Tyr-410, and 419–422 (GGAS). NADP(+)-binding positions include 519-520 (SR), 525-529 (KIYVQ), and Asp-561. FAD is bound at residue Tyr-599.

The protein belongs to the NADPH-dependent sulphite reductase flavoprotein subunit CysJ family. It in the N-terminal section; belongs to the flavodoxin family. In the C-terminal section; belongs to the flavoprotein pyridine nucleotide cytochrome reductase family. In terms of assembly, alpha(8)-beta(8). The alpha component is a flavoprotein, the beta component is a hemoprotein. The cofactor is FAD. It depends on FMN as a cofactor.

It catalyses the reaction hydrogen sulfide + 3 NADP(+) + 3 H2O = sulfite + 3 NADPH + 4 H(+). It functions in the pathway sulfur metabolism; hydrogen sulfide biosynthesis; hydrogen sulfide from sulfite (NADPH route): step 1/1. Functionally, component of the sulfite reductase complex that catalyzes the 6-electron reduction of sulfite to sulfide. This is one of several activities required for the biosynthesis of L-cysteine from sulfate. The flavoprotein component catalyzes the electron flow from NADPH -&gt; FAD -&gt; FMN to the hemoprotein component. This Klebsiella pneumoniae subsp. pneumoniae (strain ATCC 700721 / MGH 78578) protein is Sulfite reductase [NADPH] flavoprotein alpha-component.